A 442-amino-acid polypeptide reads, in one-letter code: tRNA modification GTPase MnmE (442 aa).

3 residues coordinate (6S)-5-formyl-5,6,7,8-tetrahydrofolate: Arg27, Glu84, and Lys124. The TrmE-type G domain occupies 221 to 366 (GLHVVIVGAP…LLDALQAFAE (146 aa)). Residues 231 to 236 (NAGKSS), 250 to 256 (SEEAGTT), and 275 to 278 (DTAG) contribute to the GTP site. Mg(2+)-binding residues include Ser235 and Thr256. Residue Lys442 participates in (6S)-5-formyl-5,6,7,8-tetrahydrofolate binding.

It belongs to the TRAFAC class TrmE-Era-EngA-EngB-Septin-like GTPase superfamily. TrmE GTPase family. In terms of assembly, homodimer. Heterotetramer of two MnmE and two MnmG subunits. It depends on K(+) as a cofactor.

The protein resides in the cytoplasm. Its function is as follows. Exhibits a very high intrinsic GTPase hydrolysis rate. Involved in the addition of a carboxymethylaminomethyl (cmnm) group at the wobble position (U34) of certain tRNAs, forming tRNA-cmnm(5)s(2)U34. The polypeptide is tRNA modification GTPase MnmE (Brucella melitensis biotype 1 (strain ATCC 23456 / CCUG 17765 / NCTC 10094 / 16M)).